A 210-amino-acid chain; its full sequence is UPF0637 protein RBAM_014510 (210 aa).

This sequence belongs to the UPF0637 family.

This Bacillus velezensis (strain DSM 23117 / BGSC 10A6 / LMG 26770 / FZB42) (Bacillus amyloliquefaciens subsp. plantarum) protein is UPF0637 protein RBAM_014510.